A 245-amino-acid polypeptide reads, in one-letter code: uncharacterized protein (245 aa).

It to M.tuberculosis Rv2927c.

This is an uncharacterized protein from Mycobacterium leprae (strain TN).